The sequence spans 298 residues: Protein transport protein SEC13-1 (298 aa).

6 WD repeats span residues A7–V46, G51–I92, V97–P138, A143–L196, G203–V245, and E253–S292.

The protein belongs to the WD repeat SEC13 family. In terms of assembly, the COPII coat is composed of at least 5 proteins: the SEC23/24 complex, the SEC13/31 complex, and the protein SAR1. Component of the nuclear pore complex (NPC). NPC constitutes the exclusive means of nucleocytoplasmic transport. NPCs allow the passive diffusion of ions and small molecules and the active, nuclear transport receptor-mediated bidirectional transport of macromolecules such as proteins, RNAs, ribonucleoparticles (RNPs), and ribosomal subunits across the nuclear envelope. Due to its 8-fold rotational symmetry, all subunits are present with 8 copies or multiples thereof.

The protein localises to the cytoplasmic vesicle. The protein resides in the COPII-coated vesicle membrane. It localises to the endoplasmic reticulum membrane. Its subcellular location is the nucleus. It is found in the nuclear pore complex. Functionally, component of the coat protein complex II (COPII) which promotes the formation of transport vesicles from the endoplasmic reticulum (ER). The coat has two main functions, the physical deformation of the endoplasmic reticulum membrane into vesicles and the selection of cargo molecules. It also functions as a component of the nuclear pore complex (NPC). NPC components, collectively referred to as nucleoporins (NUPs), can play the role of both NPC structural components and of docking or interaction partners for transiently associated nuclear transport factors. SEC13 is required for efficient mRNA export from the nucleus to the cytoplasm and for correct nuclear pore biogenesis and distribution. The sequence is that of Protein transport protein SEC13-1 (SEC131) from Candida glabrata (strain ATCC 2001 / BCRC 20586 / JCM 3761 / NBRC 0622 / NRRL Y-65 / CBS 138) (Yeast).